Here is a 156-residue protein sequence, read N- to C-terminus: Endogenous retrovirus group K member 21 Pro protein (156 aa).

Residues 21–96 (FEGLVDTGAD…IPLNLWGRDL (76 aa)) form the Peptidase A2 domain. Residue Asp-26 is part of the active site. One can recognise a G-patch domain in the interval 111–156 (YSPTSQKIMTKMGYIPGKGLGKNEDGIKVPVEAKINQKREGIGYPF).

This sequence belongs to the peptidase A2 family. HERV class-II K(HML-2) subfamily. Active as a homodimer. In terms of processing, autoproteolytically processed at the N-terminus. Expected C-terminal autoprocessing not detected. The sequence shown is that of the processed Pro protein.

It carries out the reaction Processing at the authentic HIV-1 PR recognition site and release of the mature p17 matrix and the p24 capsid protein, as a result of the cleavage of the -SQNY-|-PIVQ- cleavage site.. Functionally, retroviral proteases have roles in the processing of the primary translation products and the maturation of the viral particle. Endogenous Pro proteins may have kept, lost or modified their original function during evolution. This chain is Endogenous retrovirus group K member 21 Pro protein (ERVK-21), found in Homo sapiens (Human).